We begin with the raw amino-acid sequence, 463 residues long: Fumarate hydratase class II (463 aa).

Substrate is bound by residues S97–T99, H128–D131, S138–N140, and T186. Catalysis depends on H187, which acts as the Proton donor/acceptor. Residue S317 is part of the active site. Substrate contacts are provided by residues S318 and K323–N325.

It belongs to the class-II fumarase/aspartase family. Fumarase subfamily. Homotetramer.

It is found in the cytoplasm. The enzyme catalyses (S)-malate = fumarate + H2O. The protein operates within carbohydrate metabolism; tricarboxylic acid cycle; (S)-malate from fumarate: step 1/1. Involved in the TCA cycle. Catalyzes the stereospecific interconversion of fumarate to L-malate. The protein is Fumarate hydratase class II of Campylobacter jejuni subsp. jejuni serotype O:2 (strain ATCC 700819 / NCTC 11168).